A 199-amino-acid polypeptide reads, in one-letter code: V-type ATP synthase subunit E (199 aa).

It belongs to the V-ATPase E subunit family.

In terms of biological role, produces ATP from ADP in the presence of a proton gradient across the membrane. In Clostridium botulinum (strain Hall / ATCC 3502 / NCTC 13319 / Type A), this protein is V-type ATP synthase subunit E.